A 434-amino-acid polypeptide reads, in one-letter code: Methylenetetrahydrofolate--tRNA-(uracil-5-)-methyltransferase TrmFO (434 aa).

10–15 (GAGLAG) lines the FAD pocket.

It belongs to the MnmG family. TrmFO subfamily. FAD serves as cofactor.

The protein resides in the cytoplasm. It carries out the reaction uridine(54) in tRNA + (6R)-5,10-methylene-5,6,7,8-tetrahydrofolate + NADH + H(+) = 5-methyluridine(54) in tRNA + (6S)-5,6,7,8-tetrahydrofolate + NAD(+). It catalyses the reaction uridine(54) in tRNA + (6R)-5,10-methylene-5,6,7,8-tetrahydrofolate + NADPH + H(+) = 5-methyluridine(54) in tRNA + (6S)-5,6,7,8-tetrahydrofolate + NADP(+). Its function is as follows. Catalyzes the folate-dependent formation of 5-methyl-uridine at position 54 (M-5-U54) in all tRNAs. The polypeptide is Methylenetetrahydrofolate--tRNA-(uracil-5-)-methyltransferase TrmFO (Bacillus cereus (strain ATCC 10987 / NRS 248)).